The primary structure comprises 388 residues: Quinolone resistance protein NorA (388 aa).

12 helical membrane-spanning segments follow: residues 5–25, 42–62, 69–89, 99–119, 129–149, 157–177, 201–221, 239–259, 269–289, 293–313, 331–351, and 355–375; these read IFVLYFNIFLIFLGIGLVIPV, LLVAAFALSQMIISPFGGTLA, LIICIGLILFSVSEFMFAVGH, VIGGMSAGMVMPGVTGLIADI, FGYMSAIINSGFILGPGIGGF, MPFYFAGALGILAFIMSIVLI, WKVFITPVILTLVLSLGLSAF, DISIAITGGGIFGALFQIYFF, LTFIAWSLLYSVVVLILLVFA, WSIMLISFVVFIGFDMIRPAI, LNSTFTSMGNFIGPLIAGALF, and IEAPIYMAIGVSLAGVVIVLI.

Belongs to the major facilitator superfamily. TCR/Tet family.

The protein resides in the cell membrane. In terms of biological role, involved in quinolone resistance. May constitute a membrane-associated active efflux pump of hydrophilic quinolones. The sequence is that of Quinolone resistance protein NorA (norA) from Staphylococcus aureus (strain MSSA476).